A 230-amino-acid chain; its full sequence is RNA-binding protein 24 (230 aa).

Positions 11–88 (TKIFVGGLPY…RKANVNLAYL (78 aa)) constitute an RRM domain.

The protein resides in the nucleus. Its subcellular location is the cytoplasm. Its function is as follows. Multifunctional RNA-binding protein involved in the regulation of pre-mRNA splicing, mRNA stability and mRNA translation important for cell fate decision and differentiation. Plays a major role in pre-mRNA alternative splicing regulation. Mediates preferentially muscle-specific exon inclusion in numerous mRNAs important for striated cardiac and skeletal muscle cell differentiation. Binds to intronic splicing enhancer (ISE) composed of stretches of GU-rich motifs localized in flanking intron of exon that will be included by alternative splicing. Involved in embryonic stem cell (ESC) transition to cardiac cell differentiation by promoting pre-mRNA alternative splicing events of several pluripotency and/or differentiation genes. Plays a role in the regulation of mRNA stability and mRNA translation to which it is bound. Involved in myogenic differentiation by regulating myog levels. Binds to a huge amount of mRNAs. Required for embryonic heart development, sarcomer and M-band formation in striated muscles. The sequence is that of RNA-binding protein 24 (rbm24) from Danio rerio (Zebrafish).